The following is a 406-amino-acid chain: 3-oxoacyl-[acyl-carrier-protein] synthase 1 (406 aa).

The region spanning 1-403 (MKRAVITGLG…GTNATLVMRK (403 aa)) is the Ketosynthase family 3 (KS3) domain. Residues Cys-163, His-298, and His-333 each act as for beta-ketoacyl synthase activity in the active site.

It belongs to the thiolase-like superfamily. Beta-ketoacyl-ACP synthases family. Homodimer.

The protein resides in the cytoplasm. It carries out the reaction a fatty acyl-[ACP] + malonyl-[ACP] + H(+) = a 3-oxoacyl-[ACP] + holo-[ACP] + CO2. The catalysed reaction is (3Z)-decenoyl-[ACP] + malonyl-[ACP] + H(+) = 3-oxo-(5Z)-dodecenoyl-[ACP] + holo-[ACP] + CO2. It functions in the pathway lipid metabolism; fatty acid biosynthesis. Its function is as follows. Involved in the type II fatty acid elongation cycle. Catalyzes the elongation of a wide range of acyl-ACP by the addition of two carbons from malonyl-ACP to an acyl acceptor. Can also use unsaturated fatty acids. Catalyzes a key reaction in unsaturated fatty acid (UFA) synthesis, the elongation of the cis-3-decenoyl-ACP produced by FabA. The chain is 3-oxoacyl-[acyl-carrier-protein] synthase 1 (fabB) from Escherichia coli O6:H1 (strain CFT073 / ATCC 700928 / UPEC).